Consider the following 183-residue polypeptide: NAD(P)H-quinone oxidoreductase subunit J (183 aa).

The disordered stretch occupies residues 1–21 (MAEENAQEKQAPPSAGEQSEP).

The protein belongs to the complex I 30 kDa subunit family. As to quaternary structure, NDH-1 can be composed of about 15 different subunits; different subcomplexes with different compositions have been identified which probably have different functions.

It is found in the cellular thylakoid membrane. It catalyses the reaction a plastoquinone + NADH + (n+1) H(+)(in) = a plastoquinol + NAD(+) + n H(+)(out). It carries out the reaction a plastoquinone + NADPH + (n+1) H(+)(in) = a plastoquinol + NADP(+) + n H(+)(out). Its function is as follows. NDH-1 shuttles electrons from an unknown electron donor, via FMN and iron-sulfur (Fe-S) centers, to quinones in the respiratory and/or the photosynthetic chain. The immediate electron acceptor for the enzyme in this species is believed to be plastoquinone. Couples the redox reaction to proton translocation, and thus conserves the redox energy in a proton gradient. Cyanobacterial NDH-1 also plays a role in inorganic carbon-concentration. The protein is NAD(P)H-quinone oxidoreductase subunit J of Synechococcus sp. (strain JA-2-3B'a(2-13)) (Cyanobacteria bacterium Yellowstone B-Prime).